The following is a 278-amino-acid chain: Trans-2,3-dihydro-3-hydroxyanthranilate isomerase (278 aa).

Residue glutamate 45 is part of the active site.

Belongs to the PhzF family.

The catalysed reaction is (5S,6S)-6-amino-5-hydroxycyclohexa-1,3-diene-1-carboxyate = (1R,6S)-6-amino-5-oxocyclohex-2-ene-1-carboxylate. It participates in secondary metabolite biosynthesis; pyocyanine biosynthesis. In terms of biological role, isomerase that catalyzes the condensation of two molecules of trans-2,3-dihydro-3-hydroxyanthranilic acid (DHHA) into the phenazine ring system. The final product is not yet known. This is Trans-2,3-dihydro-3-hydroxyanthranilate isomerase (phzF1) from Pseudomonas aeruginosa (strain ATCC 15692 / DSM 22644 / CIP 104116 / JCM 14847 / LMG 12228 / 1C / PRS 101 / PAO1).